The sequence spans 254 residues: Ribosomal RNA small subunit methyltransferase J (254 aa).

S-adenosyl-L-methionine contacts are provided by residues 107–108 (RD), 123–124 (ER), and Asp174.

This sequence belongs to the methyltransferase superfamily. RsmJ family.

It localises to the cytoplasm. The catalysed reaction is guanosine(1516) in 16S rRNA + S-adenosyl-L-methionine = N(2)-methylguanosine(1516) in 16S rRNA + S-adenosyl-L-homocysteine + H(+). Specifically methylates the guanosine in position 1516 of 16S rRNA. In Coxiella burnetii (strain CbuK_Q154) (Coxiella burnetii (strain Q154)), this protein is Ribosomal RNA small subunit methyltransferase J.